The sequence spans 367 residues: 2'-5'-oligoadenylate synthase 1A (367 aa).

The interaction with dsRNA stretch occupies residues 14 to 61 (DKFIEDYLLPDTTFGADVKSAVNVVCDFLKERCFQGAAHPVRVSKVVK). S64 provides a ligand contact to ATP. The Mg(2+) site is built by D76, D78, and D149. Positions 201 to 211 (QRPTKLKSLIR) are interaction with dsRNA. Residues R211, K214, and Q231 each contribute to the ATP site. C364 carries S-geranylgeranyl cysteine lipidation.

This sequence belongs to the 2-5A synthase family. As to quaternary structure, monomer. Homotetramer. Interacts with OAS1D; the interaction inhibits OAS1A catalytic activity. Mg(2+) serves as cofactor. Post-translationally, C-terminal prenylated. Expressed in oocytes and granulosa cells of ovary, in intestine, stomach, spleen and uterus (at protein level). Expressed at high levels in the digestive tract and lymphoid organs. Expressed in ovary and spleen.

The protein resides in the cytoplasm. Its subcellular location is the mitochondrion. It is found in the nucleus. It localises to the microsome. The protein localises to the endoplasmic reticulum. The enzyme catalyses 3 ATP = 5'-triphosphoadenylyl-(2'-&gt;5')-adenylyl-(2'-&gt;5')-adenosine + 2 diphosphate. Its activity is regulated as follows. Produced as a latent enzyme which is activated by dsRNA generated during the course of viral infection. The dsRNA activator must be at least 15 nucleotides long, and no modification of the 2'-hydroxyl group is tolerated. ssRNA or dsDNA do not act as activators. Its function is as follows. Interferon-induced, dsRNA-activated antiviral enzyme which plays a critical role in cellular innate antiviral response. In addition, it may also play a role in other cellular processes such as apoptosis, cell growth, differentiation and gene regulation. Synthesizes higher oligomers of 2'-5'-oligoadenylates (2-5A) from ATP which then bind to the inactive monomeric form of ribonuclease L (RNase L) leading to its dimerization and subsequent activation. Activation of RNase L leads to degradation of cellular as well as viral RNA, resulting in the inhibition of protein synthesis, thus terminating viral replication. Can mediate the antiviral effect via the classical RNase L-dependent pathway or an alternative antiviral pathway independent of RNase L. The sequence is that of 2'-5'-oligoadenylate synthase 1A (Oas1a) from Mus musculus (Mouse).